A 247-amino-acid polypeptide reads, in one-letter code: MNVLSCSINTLNGLYDLSGVEVGQHFYWKIGGFQVHGQVLITSWVVIAILLGSATLAVRNPQTIPTGGQNFFEYVLEFIRDVSKTQIGEEYGPWVPFIGTMFLFIFVSNWSGALLPWKIIQLPHGELAAPTNDINTTVALALLTSVAYFYAGLTKKGLGYFGKYIQPTPILLPINILEDFTKPLSLSFRLFGKILADELVVVVLVSLVPSVVPIPVMFLGLFTSGIQALIFATLAAAYIGESMEGHH.

The next 5 helical transmembrane spans lie at 38–58 (QVLITSWVVIAILLGSATLAV), 95–115 (VPFIGTMFLFIFVSNWSGALL), 134–154 (INTTVALALLTSVAYFYAGLT), 199–219 (LVVVVLVSLVPSVVPIPVMFL), and 220–240 (GLFTSGIQALIFATLAAAYIG).

Belongs to the ATPase A chain family. F-type ATPases have 2 components, CF(1) - the catalytic core - and CF(0) - the membrane proton channel. CF(1) has five subunits: alpha(3), beta(3), gamma(1), delta(1), epsilon(1). CF(0) has four main subunits: a, b, b' and c.

It is found in the plastid. The protein localises to the chloroplast thylakoid membrane. In terms of biological role, key component of the proton channel; it plays a direct role in the translocation of protons across the membrane. The protein is ATP synthase subunit a, chloroplastic of Guizotia abyssinica (Niger).